We begin with the raw amino-acid sequence, 285 residues long: Probable endonuclease 4 (285 aa).

Zn(2+)-binding residues include His-69, His-109, Glu-145, Asp-179, His-182, His-216, Asp-229, His-231, and Glu-261.

The protein belongs to the AP endonuclease 2 family. Requires Zn(2+) as cofactor.

It carries out the reaction Endonucleolytic cleavage to 5'-phosphooligonucleotide end-products.. Endonuclease IV plays a role in DNA repair. It cleaves phosphodiester bonds at apurinic or apyrimidinic (AP) sites, generating a 3'-hydroxyl group and a 5'-terminal sugar phosphate. The sequence is that of Probable endonuclease 4 from Shigella boydii serotype 4 (strain Sb227).